Consider the following 246-residue polypeptide: MTYMKEYYTKIIEALNTISEKEDKEIASAAKSMATAVMNGNSIYLFGASHAGIIAEDAFYRAGGFALFNPIFSPSLMLNVEPVTQTSKLERLEGYGDILLDSKPVKKGDILFIHSVSGRNAVAIDMALTAKERGMGVICLTNLEYSKQVTSRHSSGYRLFELSDTVIDNGGEPGDAVVSIDLLTQKVAPISTIVGSYTIHSIVLKMIEIFEEAGTDIPIFRSANIDGGDDYNSQLFEKYKDQIHYM.

The SIS domain maps to 33–212 (MATAVMNGNS…VLKMIEIFEE (180 aa)).

It belongs to the UPF0309 family.

The protein is UPF0309 protein OB3413 of Oceanobacillus iheyensis (strain DSM 14371 / CIP 107618 / JCM 11309 / KCTC 3954 / HTE831).